The primary structure comprises 515 residues: MVLPFKHEPFTDFTVKENRKDYQDALAKVKEELGKDYPLVINGEKIYTDDKLISINPSNKNEVVGNVSKATKQHIEEAFTSAKEAFKEWKSWSAEDRARVLYRAAAIVRRRKHEFSAWLSYDAGKPWDQADGDTAEGIDFLEYYARHMVELEKGKPLADRPNEDNKYFYQPLGPGVVIPPWNFAFAIVCGTTVAPIVAGNPVLLKPSENTPVIAYKLVEVLEEAGLPKGVLNFVPGDPAEIGDYLVDHKDTHFINFTGSRATGVRIFERATKIQDGQTHLKRIVAEMGGKDTIIVDESADLDLAAESIVHSAFGFSGQKCSACSRAVIHESVYDEVIEKSVELAKTLTVGNPTEDNVYMASVVNQKQFDKIKDYIEVGKQEGELVFGGETDDNKGFFVHPTIFKDLDPKARIMQEEIFGPVVAFSKAKSFDELLDIANNTEYGLTGAVISNNRENLNRAQTEFLVGNLYFNRGCTAAIVGYQPFGGFKMSGTDSKAGGPDYLQHFLNAKVVTERF.

Residues Glu-286 and Cys-320 contribute to the active site.

It belongs to the aldehyde dehydrogenase family. RocA subfamily.

It carries out the reaction L-glutamate 5-semialdehyde + NAD(+) + H2O = L-glutamate + NADH + 2 H(+). Its pathway is amino-acid degradation; L-proline degradation into L-glutamate; L-glutamate from L-proline: step 2/2. In Oceanobacillus iheyensis (strain DSM 14371 / CIP 107618 / JCM 11309 / KCTC 3954 / HTE831), this protein is 1-pyrroline-5-carboxylate dehydrogenase.